We begin with the raw amino-acid sequence, 616 residues long: DEAD-box ATP-dependent RNA helicase 53, mitochondrial (616 aa).

Residues 1–81 (MITTVLRRSL…DFRASMVSQA (81 aa)) constitute a mitochondrion transit peptide. The Q motif signature appears at 104–132 (LAISELGISPEIVKALSSKGIEKLFPIQK). The Helicase ATP-binding domain occupies 135 to 309 (LEPAMEGRDM…KKYLNNPLTV (175 aa)). ATP is bound at residue 148–155 (ARTGTGKT). The short motif at 257 to 260 (DEAD) is the DEAD box element. In terms of domain architecture, Helicase C-terminal spans 338–482 (IIGPLVTEHA…ELPSIAVERG (145 aa)). Residues 489 to 616 (GIGSRSGGSF…FGSNDGKRSY (128 aa)) are disordered. Gly residues-rich tracts occupy residues 492 to 501 (SRSGGSFGGG) and 508 to 531 (SFGG…GRSG). 2 stretches are compositionally biased toward low complexity: residues 532 to 568 (GSSN…SGGR) and 578 to 587 (GSSNNRSSGF).

This sequence belongs to the DEAD box helicase family. DDX21/DDX50 subfamily.

The protein localises to the mitochondrion. It catalyses the reaction ATP + H2O = ADP + phosphate + H(+). The chain is DEAD-box ATP-dependent RNA helicase 53, mitochondrial (RH53) from Arabidopsis thaliana (Mouse-ear cress).